We begin with the raw amino-acid sequence, 69 residues long: Small ribosomal subunit protein bS21 (69 aa).

The protein belongs to the bacterial ribosomal protein bS21 family.

The chain is Small ribosomal subunit protein bS21 from Hyphomonas neptunium (strain ATCC 15444).